Reading from the N-terminus, the 82-residue chain is DNA-directed RNA polymerase subunit Rpo5 (82 aa).

The protein belongs to the archaeal Rpo5/eukaryotic RPB5 RNA polymerase subunit family. As to quaternary structure, part of the RNA polymerase complex.

The protein resides in the cytoplasm. The catalysed reaction is RNA(n) + a ribonucleoside 5'-triphosphate = RNA(n+1) + diphosphate. In terms of biological role, DNA-dependent RNA polymerase (RNAP) catalyzes the transcription of DNA into RNA using the four ribonucleoside triphosphates as substrates. The polypeptide is DNA-directed RNA polymerase subunit Rpo5 (Pyrococcus abyssi (strain GE5 / Orsay)).